The chain runs to 118 residues: MARFVALVLLGLLSLSGLDAIQRPPKIQVYSRHPPEDGKPNYLNCYVYGFHPPQIEIDLLKNGEKIKSEQSDLSFSKDWSFYLLSHAEFTPNSKDQYSCRVKHVTLEQPRIVKWDRDL.

An N-terminal signal peptide occupies residues M1 to A20. In terms of domain architecture, Ig-like C1-type spans P25–V112. Cysteines 45 and 99 form a disulfide.

Belongs to the beta-2-microglobulin family. As to quaternary structure, heterodimer of an alpha chain and a beta chain. Beta-2-microglobulin is the beta-chain of major histocompatibility complex class I molecules. Forms a heterotrimer with MR1 and a metabolite antigen.

It localises to the secreted. In terms of biological role, component of the class I major histocompatibility complex (MHC). Involved in the presentation of peptide antigens to the immune system. The protein is Beta-2-microglobulin (B2M) of Bos taurus (Bovine).